Here is a 63-residue protein sequence, read N- to C-terminus: MLCDNFPGAVFPGCYWGSYGYPLGYSVGCGYGSTYSPVGYGFGYGYNGCGAFGYRRYSPFALY.

The tract at residues Pro-12–Tyr-54 is 12 X 2 AA repeats of G-[YCGS].

Belongs to the KRTAP type 8 family. In terms of assembly, interacts with hair keratins. Is essentially restricted to only one vertical half of the hair forming compartment and in beard hairs is absent from the central medulla.

Functionally, in the hair cortex, hair keratin intermediate filaments are embedded in an interfilamentous matrix, consisting of hair keratin-associated proteins (KRTAP), which are essential for the formation of a rigid and resistant hair shaft through their extensive disulfide bond cross-linking with abundant cysteine residues of hair keratins. The matrix proteins include the high-sulfur and high-glycine-tyrosine keratins. In Homo sapiens (Human), this protein is Keratin-associated protein 8-1 (KRTAP8-1).